A 443-amino-acid polypeptide reads, in one-letter code: 23S rRNA (uracil(1939)-C(5))-methyltransferase RlmD (443 aa).

A TRAM domain is found at 8–66; the sequence is KPLPAEPIAAHIESFAHDGKGIAHVDGRVVFVDGALPGEDVTFVYTEIKRDYAAGRVVE. Cysteine 79, cysteine 85, cysteine 88, and cysteine 167 together coordinate [4Fe-4S] cluster. The S-adenosyl-L-methionine site is built by glutamine 276, phenylalanine 305, asparagine 310, glutamate 326, aspartate 353, and aspartate 374. Cysteine 400 acts as the Nucleophile in catalysis.

This sequence belongs to the class I-like SAM-binding methyltransferase superfamily. RNA M5U methyltransferase family. RlmD subfamily.

The catalysed reaction is uridine(1939) in 23S rRNA + S-adenosyl-L-methionine = 5-methyluridine(1939) in 23S rRNA + S-adenosyl-L-homocysteine + H(+). Its function is as follows. Catalyzes the formation of 5-methyl-uridine at position 1939 (m5U1939) in 23S rRNA. The sequence is that of 23S rRNA (uracil(1939)-C(5))-methyltransferase RlmD from Methylococcus capsulatus (strain ATCC 33009 / NCIMB 11132 / Bath).